Reading from the N-terminus, the 277-residue chain is MSMTKIPLAGVMGAPIAHSKSPQLHRHWLETYGISGFYVPMEVKAADVEHVLRTLPKMGFVGLNVTLPHKEAVLKLADQITDRARLIGAANTLTFGKDGEIHADNTDGYGFLENLRSGATDWTPSQGPAVVLGAGGAARAVIVALLDAGVPEIILTNRTRARSDQLQSDFGNRVRVMDWTQISGVLHEAQLLVNTTSLGMVGKPEMEASLDGLQAHTTVTDLVYNPLKTRLLEVAEEKGCVTVDGLGMLLHQGVPGFERWFGRRPDVTDATRAAVLG.

Shikimate-binding positions include 19–21 (SKS) and T66. K70 functions as the Proton acceptor in the catalytic mechanism. D82 is an NADP(+) binding site. Residues N91 and D107 each coordinate shikimate. NADP(+) is bound by residues 133–137 (GAGGA), 157–162 (NRTRAR), and L222. Y224 contacts shikimate. G245 contacts NADP(+).

It belongs to the shikimate dehydrogenase family. As to quaternary structure, homodimer.

The enzyme catalyses shikimate + NADP(+) = 3-dehydroshikimate + NADPH + H(+). The protein operates within metabolic intermediate biosynthesis; chorismate biosynthesis; chorismate from D-erythrose 4-phosphate and phosphoenolpyruvate: step 4/7. Its function is as follows. Involved in the biosynthesis of the chorismate, which leads to the biosynthesis of aromatic amino acids. Catalyzes the reversible NADPH linked reduction of 3-dehydroshikimate (DHSA) to yield shikimate (SA). The polypeptide is Shikimate dehydrogenase (NADP(+)) (Roseobacter denitrificans (strain ATCC 33942 / OCh 114) (Erythrobacter sp. (strain OCh 114))).